Reading from the N-terminus, the 244-residue chain is Uridylate kinase (244 aa).

17–20 (KVSG) serves as a coordination point for ATP. Residues 25-30 (GEKGFG) are involved in allosteric activation by GTP. Glycine 59 is a binding site for UMP. ATP contacts are provided by glycine 60 and arginine 64. UMP is bound by residues aspartate 80 and 141-148 (VGNPFFTT). Residues threonine 168, glutamine 169, tyrosine 174, and aspartate 177 each contribute to the ATP site.

This sequence belongs to the UMP kinase family. As to quaternary structure, homohexamer.

It is found in the cytoplasm. It catalyses the reaction UMP + ATP = UDP + ADP. It functions in the pathway pyrimidine metabolism; CTP biosynthesis via de novo pathway; UDP from UMP (UMPK route): step 1/1. Its activity is regulated as follows. Allosterically activated by GTP. Inhibited by UTP. Catalyzes the reversible phosphorylation of UMP to UDP. In Ehrlichia canis (strain Jake), this protein is Uridylate kinase.